The following is a 499-amino-acid chain: Gamma-aminobutyric acid receptor subunit beta (499 aa).

The N-terminal stretch at 1-23 (MWGIIVPFFSASLMCSLVAVVRC) is a signal peptide. At 24 to 251 (QQDTDHFANV…IFQLQRNIGY (228 aa)) the chain is on the extracellular side. Asparagine 32, asparagine 98, asparagine 106, and asparagine 152 each carry an N-linked (GlcNAc...) asparagine glycan. The cysteines at positions 167 and 181 are disulfide-linked. Helical transmembrane passes span 252–273 (FIFQ…SFWI), 278–299 (TSAR…SNGV), and 311–333 (AIDI…YAAV). Topologically, residues 334–475 (NYTYWGARAK…RVQDVNTIDK (142 aa)) are cytoplasmic. A helical transmembrane segment spans residues 476–499 (YARLMFPLLFIIFNTSYWSVYLLT).

This sequence belongs to the ligand-gated ion channel (TC 1.A.9) family. Gamma-aminobutyric acid receptor (TC 1.A.9.5) subfamily. In terms of assembly, generally pentameric. There are five types of GABA(A) receptor chains: alpha, beta, gamma, delta, and rho.

It is found in the postsynaptic cell membrane. The protein resides in the cell membrane. In terms of biological role, GABA, an inhibitory neurotransmitter, mediates neuronal inhibition by binding to the GABA/benzodiazepine receptor and opening an integral chloride channel. This is Gamma-aminobutyric acid receptor subunit beta from Lymnaea stagnalis (Great pond snail).